The following is a 957-amino-acid chain: Bifunctional glutamine synthetase adenylyltransferase/adenylyl-removing enzyme (957 aa).

The interval 1–447 (MFSQLDFTGL…IFNQLIGEEE (447 aa)) is adenylyl removase. The interval 454 to 957 (VNEQLAIWQD…IWQQIFTDNE (504 aa)) is adenylyl transferase.

Belongs to the GlnE family. Mg(2+) serves as cofactor.

It catalyses the reaction [glutamine synthetase]-O(4)-(5'-adenylyl)-L-tyrosine + phosphate = [glutamine synthetase]-L-tyrosine + ADP. The enzyme catalyses [glutamine synthetase]-L-tyrosine + ATP = [glutamine synthetase]-O(4)-(5'-adenylyl)-L-tyrosine + diphosphate. Involved in the regulation of glutamine synthetase GlnA, a key enzyme in the process to assimilate ammonia. When cellular nitrogen levels are high, the C-terminal adenylyl transferase (AT) inactivates GlnA by covalent transfer of an adenylyl group from ATP to specific tyrosine residue of GlnA, thus reducing its activity. Conversely, when nitrogen levels are low, the N-terminal adenylyl removase (AR) activates GlnA by removing the adenylyl group by phosphorolysis, increasing its activity. The regulatory region of GlnE binds the signal transduction protein PII (GlnB) which indicates the nitrogen status of the cell. The protein is Bifunctional glutamine synthetase adenylyltransferase/adenylyl-removing enzyme of Haemophilus ducreyi (strain 35000HP / ATCC 700724).